The sequence spans 405 residues: NAC transcription factor NAM-A1 (405 aa).

The span at 1–10 (MGSSDSSSGS) shows a compositional bias: low complexity. The segment at 1–38 (MGSSDSSSGSAQKAARHQHEPPPPRQRGSAPELPPGFR) is disordered. An NAC domain is found at 33–204 (LPPGFRFHPT…DWVLCRIYKK (172 aa)). Residues 137–210 (LGVKKALVFY…IYKKINKAAA (74 aa)) mediate DNA binding.

As to expression, expressed in flag leaves, green spikes and peduncles.

It localises to the nucleus. Its function is as follows. Transcription factor of the NAC family associated with the grain protein content (GPC). Accelerates senescence and increases nutrient remobilization from leaves to developing grains. The tetraploid cultivated wheat (T.durum) contains one additional gene coding for a functional protein (NAM-B2) and one extra pseudogene (NAM-B1). The sequence is that of NAC transcription factor NAM-A1 (NAM-A1) from Triticum turgidum subsp. durum (Durum wheat).